A 623-amino-acid chain; its full sequence is DNA mismatch repair protein MutL (623 aa).

The span at 353 to 368 (AQQSAPRPANSYSPAS) shows a compositional bias: polar residues. The interval 353–389 (AQQSAPRPANSYSPASWRTAPPAPRSEWSPQTAQTAH) is disordered.

This sequence belongs to the DNA mismatch repair MutL/HexB family.

This protein is involved in the repair of mismatches in DNA. It is required for dam-dependent methyl-directed DNA mismatch repair. May act as a 'molecular matchmaker', a protein that promotes the formation of a stable complex between two or more DNA-binding proteins in an ATP-dependent manner without itself being part of a final effector complex. This chain is DNA mismatch repair protein MutL, found in Brucella melitensis biotype 2 (strain ATCC 23457).